Here is a 1058-residue protein sequence, read N- to C-terminus: Carbamoyl phosphate synthase large chain (1058 aa).

Positions 1-401 (MPKRTDIQKI…SLLKACRSLE (401 aa)) are carboxyphosphate synthetic domain. Residues Arg129, Arg169, Gly175, Gly176, Arg208, Ile210, Glu215, Gly241, Ile242, His243, Gln284, and Glu298 each coordinate ATP. Residues 133 to 327 (KQLMEELEQP…IAKLAAKIAV (195 aa)) form the ATP-grasp 1 domain. Mg(2+) is bound by residues Gln284, Glu298, and Asn300. Positions 284, 298, and 300 each coordinate Mn(2+). An oligomerization domain region spans residues 402 to 546 (IGVHHNEIPE…YSTYGWENES (145 aa)). The tract at residues 547–929 (IRSDKESVLV…ALYKAFEASY (383 aa)) is carbamoyl phosphate synthetic domain. The ATP-grasp 2 domain occupies 671–861 (EQALKELDIP…MAQVATKLIL (191 aa)). 10 residues coordinate ATP: Arg707, Ser746, Ile748, Glu752, Gly777, Val778, His779, Ser780, Gln820, and Glu832. 3 residues coordinate Mg(2+): Gln820, Glu832, and Asn834. 3 residues coordinate Mn(2+): Gln820, Glu832, and Asn834. The MGS-like domain occupies 930 to 1058 (LHLPTFGNVV…ESRSFVTEAI (129 aa)). Residues 930-1058 (LHLPTFGNVV…ESRSFVTEAI (129 aa)) form an allosteric domain region.

It belongs to the CarB family. In terms of assembly, composed of two chains; the small (or glutamine) chain promotes the hydrolysis of glutamine to ammonia, which is used by the large (or ammonia) chain to synthesize carbamoyl phosphate. Tetramer of heterodimers (alpha,beta)4. The cofactor is Mg(2+). Mn(2+) is required as a cofactor.

It catalyses the reaction hydrogencarbonate + L-glutamine + 2 ATP + H2O = carbamoyl phosphate + L-glutamate + 2 ADP + phosphate + 2 H(+). It carries out the reaction hydrogencarbonate + NH4(+) + 2 ATP = carbamoyl phosphate + 2 ADP + phosphate + 2 H(+). It participates in amino-acid biosynthesis; L-arginine biosynthesis; carbamoyl phosphate from bicarbonate: step 1/1. The protein operates within pyrimidine metabolism; UMP biosynthesis via de novo pathway; (S)-dihydroorotate from bicarbonate: step 1/3. Its function is as follows. Large subunit of the glutamine-dependent carbamoyl phosphate synthetase (CPSase). CPSase catalyzes the formation of carbamoyl phosphate from the ammonia moiety of glutamine, carbonate, and phosphate donated by ATP, constituting the first step of 2 biosynthetic pathways, one leading to arginine and/or urea and the other to pyrimidine nucleotides. The large subunit (synthetase) binds the substrates ammonia (free or transferred from glutamine from the small subunit), hydrogencarbonate and ATP and carries out an ATP-coupled ligase reaction, activating hydrogencarbonate by forming carboxy phosphate which reacts with ammonia to form carbamoyl phosphate. The polypeptide is Carbamoyl phosphate synthase large chain (Streptococcus pneumoniae (strain ATCC BAA-255 / R6)).